A 470-amino-acid chain; its full sequence is Glutamate--tRNA ligase (470 aa).

The 'HIGH' region motif lies at 9 to 19 (PSPTGFLHVGG). A 'KMSKS' region motif is present at residues 236 to 240 (RLSKR). Position 239 (lysine 239) interacts with ATP.

The protein belongs to the class-I aminoacyl-tRNA synthetase family. Glutamate--tRNA ligase type 1 subfamily. In terms of assembly, monomer.

The protein localises to the cytoplasm. It catalyses the reaction tRNA(Glu) + L-glutamate + ATP = L-glutamyl-tRNA(Glu) + AMP + diphosphate. Catalyzes the attachment of glutamate to tRNA(Glu) in a two-step reaction: glutamate is first activated by ATP to form Glu-AMP and then transferred to the acceptor end of tRNA(Glu). The protein is Glutamate--tRNA ligase of Legionella pneumophila (strain Corby).